The following is a 515-amino-acid chain: MQLNPAEISDLIKAKIENLSVNAEVSTRGTVISVTDGIVRIHGLSDAMQGEMLEFPGNTLGLAMNLERDSVGAVVLGEYEHIKEGDTVTCTGRILEVPVGRELVGRVVDALGRPIDGKGPINTTLTAPVEKIAPGVIARKSVDQPMQTGLKAIDSMIPVGRGQRELIIGDRQTGKTAVALDAIVNQKGTGVICIYVAIGQKASSIANVVRKLEEHGAMEHTIVVAATASEAAALQYIAPYSGCTMGEFFRDRGEDALIVYDDLSKQAVAYRQISLLLRRPPGREAYPGDVFYLHSRLLERAARVNEHEVEKLTNGEVKGKTGSLTALPIIETQAGDVSAFVPTNVISITDGQIFLETDLFNAGIRPAINAGISVSRVGGAAQTKVIKKLGGGIRLALAQYRELAAFSQFASDLDEATRKQLEHGEVVTELMKQKQFSTLNTAEMALTLWAINNGSYSDVPVAKALAFESEFLSFVRTQHPEVLEAVNASGAMSDESEKTLEAAMKSFKSSYAYQA.

169-176 (GDRQTGKT) provides a ligand contact to ATP.

Belongs to the ATPase alpha/beta chains family. As to quaternary structure, F-type ATPases have 2 components, CF(1) - the catalytic core - and CF(0) - the membrane proton channel. CF(1) has five subunits: alpha(3), beta(3), gamma(1), delta(1), epsilon(1). CF(0) has three main subunits: a(1), b(2) and c(9-12). The alpha and beta chains form an alternating ring which encloses part of the gamma chain. CF(1) is attached to CF(0) by a central stalk formed by the gamma and epsilon chains, while a peripheral stalk is formed by the delta and b chains.

The protein localises to the cell inner membrane. It catalyses the reaction ATP + H2O + 4 H(+)(in) = ADP + phosphate + 5 H(+)(out). In terms of biological role, produces ATP from ADP in the presence of a proton gradient across the membrane. The alpha chain is a regulatory subunit. The sequence is that of ATP synthase subunit alpha from Neisseria gonorrhoeae (strain ATCC 700825 / FA 1090).